The chain runs to 310 residues: Porphobilinogen deaminase (310 aa).

Cys-242 bears the S-(dipyrrolylmethanemethyl)cysteine mark.

The protein belongs to the HMBS family. Monomer. Dipyrromethane serves as cofactor.

It catalyses the reaction 4 porphobilinogen + H2O = hydroxymethylbilane + 4 NH4(+). It functions in the pathway porphyrin-containing compound metabolism; protoporphyrin-IX biosynthesis; coproporphyrinogen-III from 5-aminolevulinate: step 2/4. In terms of biological role, tetrapolymerization of the monopyrrole PBG into the hydroxymethylbilane pre-uroporphyrinogen in several discrete steps. The sequence is that of Porphobilinogen deaminase from Shewanella baltica (strain OS195).